The primary structure comprises 401 residues: Argininosuccinate synthase (401 aa).

Residues 10–18 and Ala38 contribute to the ATP site; that span reads AYSGGVDTS. L-citrulline is bound at residue Tyr89. Gly119 provides a ligand contact to ATP. Thr121, Asn125, and Asp126 together coordinate L-aspartate. Asn125 lines the L-citrulline pocket. 5 residues coordinate L-citrulline: Arg129, Ser177, Ser186, Glu262, and Tyr274.

It belongs to the argininosuccinate synthase family. Type 1 subfamily. As to quaternary structure, homotetramer.

The protein resides in the cytoplasm. The catalysed reaction is L-citrulline + L-aspartate + ATP = 2-(N(omega)-L-arginino)succinate + AMP + diphosphate + H(+). It participates in amino-acid biosynthesis; L-arginine biosynthesis; L-arginine from L-ornithine and carbamoyl phosphate: step 2/3. This is Argininosuccinate synthase from Microcystis aeruginosa (strain NIES-843 / IAM M-2473).